The following is a 177-amino-acid chain: R-phycoerythrin beta chain (177 aa).

Phycourobilin contacts are provided by Cys50 and Cys61. At Asn72 the chain carries N4-methylasparagine. Residues Cys82 and Cys158 each coordinate (2R,3E)-phycoerythrobilin.

This sequence belongs to the phycobiliprotein family. As to quaternary structure, heterodimer of an alpha and a beta chain. Contains two covalently linked phycoerythrobilin chromophores and one covalently linked phycourobilin chromophore.

It localises to the plastid. Its subcellular location is the chloroplast thylakoid membrane. Functionally, light-harvesting photosynthetic bile pigment-protein from the phycobiliprotein complex. This is R-phycoerythrin beta chain (cpeB) from Pyropia haitanensis (Red seaweed).